Reading from the N-terminus, the 135-residue chain is Transcription antitermination protein NusB (135 aa).

This sequence belongs to the NusB family.

In terms of biological role, involved in transcription antitermination. Required for transcription of ribosomal RNA (rRNA) genes. Binds specifically to the boxA antiterminator sequence of the ribosomal RNA (rrn) operons. This Clostridium perfringens (strain SM101 / Type A) protein is Transcription antitermination protein NusB.